Reading from the N-terminus, the 270-residue chain is Tetraspanin-17 (270 aa).

Topologically, residues 1–19 are cytoplasmic; sequence MPGKHQHFQEPEVGCCGKY. The helical transmembrane segment at 20–40 threads the bilayer; the sequence is FLFGFNIVFWVLGALFLAIGL. At 41 to 63 the chain is on the extracellular side; sequence WAWSEKGVLSNISALTDLGGLDP. A glycan (N-linked (GlcNAc...) asparagine) is linked at asparagine 51. Residues 64–84 traverse the membrane as a helical segment; that stretch reads VWLFVVVGGVMSVLGFAGCIG. Residues 85–94 lie on the Cytoplasmic side of the membrane; that stretch reads ALRENTFLLK. The helical transmembrane segment at 95-115 threads the bilayer; the sequence is FFSVFLGLIFFLELATGILAF. The Extracellular segment spans residues 116-234; that stretch reads VFKDWIRDQL…GQFEKWLQDN (119 aa). Cystine bridges form between cysteine 155/cysteine 223, cysteine 156/cysteine 188, cysteine 172/cysteine 182, and cysteine 189/cysteine 202. An N-linked (GlcNAc...) asparagine glycan is attached at asparagine 171. Residues 235-255 form a helical membrane-spanning segment; it reads LIVVAGVFVGIALLQIFGICL. The Cytoplasmic segment spans residues 256–270; that stretch reads AQNLVSDIKAVKANW.

Belongs to the tetraspanin (TM4SF) family. As to quaternary structure, interacts with ADAM10; the interaction influences ADAM10 substrate specificity, endocytosis and turnover.

It localises to the cell membrane. Its function is as follows. Part of TspanC8 subgroup, composed of 6 members that interact with the transmembrane metalloprotease ADAM10. This interaction is required for ADAM10 exit from the endoplasmic reticulum and for enzymatic maturation and trafficking to the cell surface as well as substrate specificity. Different TspanC8/ADAM10 complexes have distinct substrates. Seems to regulate VE-cadherin expression in endothelial cells probably through interaction with ADAM10, promoting leukocyte transmigration. This chain is Tetraspanin-17 (TSPAN17), found in Bos taurus (Bovine).